A 332-amino-acid chain; its full sequence is Spherulin-4 (332 aa).

Residues 1-22 form the signal peptide; that stretch reads MNIKIVVLVIFAILLGSALAWH. A disordered region spans residues 26 to 60; sequence HHNPTKAPTEAPHRGGGGGGGHNTPAPTQPPRQNT.

This is Spherulin-4 from Physarum polycephalum (Slime mold).